The sequence spans 375 residues: Putative glycyl-radical enzyme activating enzyme MJ0021 (375 aa).

In terms of domain architecture, Radical SAM core spans Q23–D246. Residues C38, C42, and C45 each contribute to the [4Fe-4S] cluster site. Residues Y44 to P46 and G87 contribute to the S-adenosyl-L-methionine site.

Belongs to the organic radical-activating enzymes family. [4Fe-4S] cluster serves as cofactor.

It catalyses the reaction glycyl-[protein] + reduced [flavodoxin] + S-adenosyl-L-methionine = glycin-2-yl radical-[protein] + semiquinone [flavodoxin] + 5'-deoxyadenosine + L-methionine + H(+). This chain is Putative glycyl-radical enzyme activating enzyme MJ0021, found in Methanocaldococcus jannaschii (strain ATCC 43067 / DSM 2661 / JAL-1 / JCM 10045 / NBRC 100440) (Methanococcus jannaschii).